Reading from the N-terminus, the 213-residue chain is Octanoyltransferase (213 aa).

In terms of domain architecture, BPL/LPL catalytic spans 32–207; the sequence is ESTLDEIWLV…NILALLNNPD (176 aa). Residues 71–78, 138–140, and 151–153 each bind substrate; these read RGGQVTYH, SLG, and GLA. Cys-169 serves as the catalytic Acyl-thioester intermediate.

This sequence belongs to the LipB family.

The protein localises to the cytoplasm. It carries out the reaction octanoyl-[ACP] + L-lysyl-[protein] = N(6)-octanoyl-L-lysyl-[protein] + holo-[ACP] + H(+). It participates in protein modification; protein lipoylation via endogenous pathway; protein N(6)-(lipoyl)lysine from octanoyl-[acyl-carrier-protein]: step 1/2. Catalyzes the transfer of endogenously produced octanoic acid from octanoyl-acyl-carrier-protein onto the lipoyl domains of lipoate-dependent enzymes. Lipoyl-ACP can also act as a substrate although octanoyl-ACP is likely to be the physiological substrate. The sequence is that of Octanoyltransferase from Escherichia coli (strain SMS-3-5 / SECEC).